We begin with the raw amino-acid sequence, 414 residues long: Multifunctional CCA protein (414 aa).

Residues G8 and R11 each coordinate ATP. CTP contacts are provided by G8 and R11. Mg(2+) contacts are provided by E21 and D23. R91, R137, and R140 together coordinate ATP. Residues R91, R137, and R140 each coordinate CTP. The HD domain maps to T228–W329.

This sequence belongs to the tRNA nucleotidyltransferase/poly(A) polymerase family. Bacterial CCA-adding enzyme type 1 subfamily. Monomer. Can also form homodimers and oligomers. Requires Mg(2+) as cofactor. Ni(2+) serves as cofactor.

It catalyses the reaction a tRNA precursor + 2 CTP + ATP = a tRNA with a 3' CCA end + 3 diphosphate. The catalysed reaction is a tRNA with a 3' CCA end + 2 CTP + ATP = a tRNA with a 3' CCACCA end + 3 diphosphate. Its function is as follows. Catalyzes the addition and repair of the essential 3'-terminal CCA sequence in tRNAs without using a nucleic acid template. Adds these three nucleotides in the order of C, C, and A to the tRNA nucleotide-73, using CTP and ATP as substrates and producing inorganic pyrophosphate. tRNA 3'-terminal CCA addition is required both for tRNA processing and repair. Also involved in tRNA surveillance by mediating tandem CCA addition to generate a CCACCA at the 3' terminus of unstable tRNAs. While stable tRNAs receive only 3'-terminal CCA, unstable tRNAs are marked with CCACCA and rapidly degraded. The protein is Multifunctional CCA protein of Pectobacterium carotovorum subsp. carotovorum (strain PC1).